The primary structure comprises 138 residues: Flavodoxin (138 aa).

The region spanning 1–136 is the Flavodoxin-like domain; that stretch reads MKIVYWSGTG…DCIEFGKKIA (136 aa).

The protein belongs to the flavodoxin family. FMN serves as cofactor.

Low-potential electron donor to a number of redox enzymes. In Clostridium beijerinckii (Clostridium MP), this protein is Flavodoxin.